The sequence spans 312 residues: Olfactory receptor-like protein COR2 (312 aa).

At 1–26 (MASGNCTTPTTFILSGLTDNPRLQMP) the chain is on the extracellular side. An N-linked (GlcNAc...) asparagine glycan is attached at N5. Residues 27-49 (LFMVFLVIYTTTLLTNLGLIALI) form a helical membrane-spanning segment. Residues 50 to 57 (GMDLHLQT) lie on the Cytoplasmic side of the membrane. The chain crosses the membrane as a helical span at residues 58-79 (PMYIFLQNLSFTDAAYSTVITP). Over 80–100 (KMLATFLEERRTISYVGCILQ) the chain is Extracellular. A disulfide bridge links C97 with C179. The helical transmembrane segment at 101 to 120 (YFSFVLLTTSEWLLLAVMAY) threads the bilayer. At 121–139 (DRYVAICKPLLYPSIMTKA) the chain is on the cytoplasmic side. Residues 140 to 164 (VCWRLVKGLYSLAFLNSLVHTSGLL) form a helical membrane-spanning segment. At 165–205 (KLSFCSSNVVNHFFCDNRPLFQISSSSTTLNELLVIISGSL) the chain is on the extracellular side. The chain crosses the membrane as a helical span at residues 206-226 (FVMSSIITILISYVFIILTVV). The Cytoplasmic portion of the chain corresponds to 227–239 (MIRSKDGKYKAFS). Residues 240-260 (TCTSHLMAVSLFHGTVIFMYL) traverse the membrane as a helical segment. The Extracellular portion of the chain corresponds to 261-271 (RSVKLFSLDTD). Residues 272-292 (KIASLFYTVVIPMLNPLIYSW) traverse the membrane as a helical segment. Topologically, residues 293 to 312 (RNKEVKDALRRLTATSVWLH) are cytoplasmic.

Belongs to the G-protein coupled receptor 1 family.

The protein resides in the cell membrane. In terms of biological role, odorant receptor. In Gallus gallus (Chicken), this protein is Olfactory receptor-like protein COR2 (COR2).